We begin with the raw amino-acid sequence, 199 residues long: Large ribosomal subunit protein uL4 (199 aa).

This sequence belongs to the universal ribosomal protein uL4 family. Part of the 50S ribosomal subunit.

In terms of biological role, one of the primary rRNA binding proteins, this protein initially binds near the 5'-end of the 23S rRNA. It is important during the early stages of 50S assembly. It makes multiple contacts with different domains of the 23S rRNA in the assembled 50S subunit and ribosome. Forms part of the polypeptide exit tunnel. The protein is Large ribosomal subunit protein uL4 of Aquifex aeolicus (strain VF5).